Consider the following 363-residue polypeptide: Peptide chain release factor 2 (363 aa).

The residue at position 251 (Gln251) is an N5-methylglutamine.

It belongs to the prokaryotic/mitochondrial release factor family. In terms of processing, methylated by PrmC. Methylation increases the termination efficiency of RF2.

It localises to the cytoplasm. Its function is as follows. Peptide chain release factor 2 directs the termination of translation in response to the peptide chain termination codons UGA and UAA. This is Peptide chain release factor 2 from Helicobacter pylori (strain P12).